The chain runs to 864 residues: Ribosome biogenesis protein ERB1 (864 aa).

The segment covering 1-52 has biased composition (basic and acidic residues); that stretch reads MAVDKGRRPVPPERRAQGRKRAEPGDVTIRETRTRPVHTPEPEPELLAKDGI. Disordered stretches follow at residues 1–153 and 191–231; these read MAVD…VKEG and ESRN…STED. A compositionally biased stretch (acidic residues) spans 53 to 71; the sequence is LELEDDDDNDDDDDDDDDD. Residues 72-83 are compositionally biased toward basic and acidic residues; the sequence is KSNHHDGAPKNE. A compositionally biased stretch (acidic residues) spans 100–135; sequence DDGDEDEEEDDEDEDEDASDDEAFDSDDLENWDEEA. WD repeat units lie at residues 509 to 549, 559 to 599, 694 to 732, 735 to 774, 778 to 817, and 833 to 864; these read AHAP…CVAT, ADRS…KTMY, NSAMAVQCVCFHPSRPWLFVATQRYVRVYDLVQQSLVKT, PGVRWISSLDVHPSGDHVIIGSYDRRVLWFDLDLSERPYK, YHSRAVRAVAYHPRFPLFASAADDGTVHVYHGTVYSDLLQ, and QDALGVLSIAWHPTLPWLVSAGADGDARLWTP.

This sequence belongs to the WD repeat BOP1/ERB1 family. As to quaternary structure, component of the NOP7 complex, composed of ERB1, NOP7 and YTM1. The complex is held together by ERB1, which interacts with NOP7 via its N-terminal domain and with YTM1 via a high-affinity interaction between the seven-bladed beta-propeller domains of the 2 proteins. The NOP7 complex associates with the 66S pre-ribosome.

Its subcellular location is the nucleus. It localises to the nucleolus. The protein localises to the nucleoplasm. In terms of biological role, component of the NOP7 complex, which is required for maturation of the 25S and 5.8S ribosomal RNAs and formation of the 60S ribosome. This chain is Ribosome biogenesis protein ERB1, found in Malassezia globosa (strain ATCC MYA-4612 / CBS 7966) (Dandruff-associated fungus).